The following is a 285-amino-acid chain: Sulfotransferase 2A2 (285 aa).

3'-phosphoadenylyl sulfate contacts are provided by lysine 44, serine 45, glycine 46, threonine 47, asparagine 48, and tryptophan 49. The active-site Proton acceptor is histidine 99. Arginine 121, serine 129, tyrosine 184, serine 218, methionine 223, arginine 247, lysine 248, and glycine 249 together coordinate 3'-phosphoadenylyl sulfate.

The protein belongs to the sulfotransferase 1 family.

The protein localises to the cytoplasm. It catalyses the reaction an alcohol + 3'-phosphoadenylyl sulfate = an alkyl sulfate + adenosine 3',5'-bisphosphate + H(+). Its function is as follows. Sulfotransferase that utilizes 3'-phospho-5'-adenylyl sulfate (PAPS) as sulfonate donor to catalyze the sulfate conjugation of a potential wide variety of acceptor molecules bearing a hydroxyl group. Sulfonation increases the water solubility of most compounds, and therefore their renal excretion, but it can also result in bioactivation to form active metabolites. The protein is Sulfotransferase 2A2 of Mus musculus (Mouse).